We begin with the raw amino-acid sequence, 308 residues long: Phosphoribosylaminoimidazole-succinocarboxamide synthase (308 aa).

It belongs to the SAICAR synthetase family.

The catalysed reaction is 5-amino-1-(5-phospho-D-ribosyl)imidazole-4-carboxylate + L-aspartate + ATP = (2S)-2-[5-amino-1-(5-phospho-beta-D-ribosyl)imidazole-4-carboxamido]succinate + ADP + phosphate + 2 H(+). It participates in purine metabolism; IMP biosynthesis via de novo pathway; 5-amino-1-(5-phospho-D-ribosyl)imidazole-4-carboxamide from 5-amino-1-(5-phospho-D-ribosyl)imidazole-4-carboxylate: step 1/2. The sequence is that of Phosphoribosylaminoimidazole-succinocarboxamide synthase from Xylella fastidiosa (strain 9a5c).